We begin with the raw amino-acid sequence, 349 residues long: Mitomycin biosynthesis 6-O-methyltransferase (349 aa).

Residues Ser167, Gly190, 213-214 (ER), 240-241 (DF), and Lys255 contribute to the S-adenosyl-L-methionine site. His259 acts as the Proton acceptor in catalysis. Asn288 serves as a coordination point for substrate.

The protein belongs to the class I-like SAM-binding methyltransferase superfamily. Cation-independent O-methyltransferase family. COMT subfamily. Homodimer.

It carries out the reaction 6-demethylmitomycin A + S-adenosyl-L-methionine = mitomycin A + S-adenosyl-L-homocysteine. It catalyses the reaction 6-demethylmitomycin B + S-adenosyl-L-methionine = mitomycin B + S-adenosyl-L-homocysteine. Completely inhibited by Zn(2+) and Cu(2+). In terms of biological role, involved in the biosynthesis of the quinone methoxy group present in the mitomycin A and B, which are used as anticancer agents. In vitro, catalyzes the 6-O-methylation of both C9-beta- and C9-alpha-configured 6-hydroxymitomycins via the transfer of the S-methyl group of S-adenosyl-L-methionine (AdoMet) to the 6-demethylmitomycin A and B. It can also use hydroxyquinone as substrate. The protein is Mitomycin biosynthesis 6-O-methyltransferase of Streptomyces lavendulae.